A 454-amino-acid polypeptide reads, in one-letter code: Peroxisome assembly protein 10 (454 aa).

At 1–23 (MATQPPPARPPPPLTSSPYPYAA) the chain is on the peroxisomal matrix side. The chain crosses the membrane as a helical span at residues 24 to 53 (APDIIRAHQKDAYFQGVLANRLSDLHRRLR). Residue G54 is a topological domain, cytoplasmic. Residues 55 to 76 (ARSAHAWAAETRTFAAALYLCL) form a helical membrane-spanning segment. At 77–132 (TTLLGNRTLGEEYCDLVQVEEAPSKLFASSSSKAADDHIYENGLGGGGDGGPLLPS) the chain is on the peroxisomal matrix side. The chain crosses the membrane as a helical span at residues 133–165 (LPRRAGYILTAIVLPHLASRALPSVRSAIRKRL). At 166–201 (QSRLATLSRRRQQTGTKSGSGRGGRGGGGGITEYRV) the chain is on the cytoplasmic side. The tract at residues 171 to 194 (TLSRRRQQTGTKSGSGRGGRGGGG) is disordered. Residues 183 to 194 (SGSGRGGRGGGG) show a composition bias toward gly residues. A helical transmembrane segment spans residues 202 to 229 (LRYLLTHLTPLTSGAHFRAATLAVFYFT). Residues 230–276 (GAYYELSKWVWGLRYVFTTRAGRVVDDDHNRHHHSPQHGGGNGGRAG) are Peroxisomal matrix-facing. The chain crosses the membrane as a helical span at residues 277 to 296 (YEVLGVLLVVQMAVRAWLHV). The Cytoplasmic portion of the chain corresponds to 297–454 (REQLSSGSVA…VQHILPLRAA (158 aa)). The disordered stretch occupies residues 302-329 (SGSVAGGGGEEEEDGEDGFRERTAFGPG). 8 residues coordinate Zn(2+): C402, C405, C417, H419, C422, C425, C436, and C439. The RING-type zinc finger occupies 402–440 (CTLCLEELKDPAATQCGHVFCWACIGDWVREKPECPLCR).

It belongs to the pex2/pex10/pex12 family. Component of the PEX2-PEX10-PEX12 retrotranslocation channel, composed of PEX2, PEX10 and PEX12.

The protein resides in the peroxisome membrane. The catalysed reaction is S-ubiquitinyl-[E2 ubiquitin-conjugating enzyme]-L-cysteine + [acceptor protein]-L-lysine = [E2 ubiquitin-conjugating enzyme]-L-cysteine + N(6)-ubiquitinyl-[acceptor protein]-L-lysine.. It participates in protein modification; protein ubiquitination. Its activity is regulated as follows. The E3 ubiquitin-protein ligase activity is stimulated by PEX12. Functionally, E3 ubiquitin-protein ligase component of a retrotranslocation channel required for peroxisome organization by mediating export of the PEX5 receptor from peroxisomes to the cytosol, thereby promoting PEX5 recycling. The retrotranslocation channel is composed of PEX2, PEX10 and PEX12; each subunit contributing transmembrane segments that coassemble into an open channel that specifically allows the passage of PEX5 through the peroxisomal membrane. PEX10 also regulates PEX5 recycling by acting as a E3 ubiquitin-protein ligase. When PEX5 recycling is compromised, PEX10 catalyzes polyubiquitination of PEX5 during its passage through the retrotranslocation channel, leading to its degradation. The sequence is that of Peroxisome assembly protein 10 from Thermothelomyces thermophilus (strain ATCC 42464 / BCRC 31852 / DSM 1799) (Sporotrichum thermophile).